The sequence spans 157 residues: Cyclic pyranopterin monophosphate synthase (157 aa).

Substrate is bound by residues 74-76 (MCH) and 112-113 (ME). Asp-127 is an active-site residue.

This sequence belongs to the MoaC family. As to quaternary structure, homohexamer; trimer of dimers.

The catalysed reaction is (8S)-3',8-cyclo-7,8-dihydroguanosine 5'-triphosphate = cyclic pyranopterin phosphate + diphosphate. Its pathway is cofactor biosynthesis; molybdopterin biosynthesis. Catalyzes the conversion of (8S)-3',8-cyclo-7,8-dihydroguanosine 5'-triphosphate to cyclic pyranopterin monophosphate (cPMP). This chain is Cyclic pyranopterin monophosphate synthase, found in Campylobacter jejuni subsp. doylei (strain ATCC BAA-1458 / RM4099 / 269.97).